We begin with the raw amino-acid sequence, 1396 residues long: DNA-directed RNA polymerase subunit beta' (1396 aa).

Zn(2+) is bound by residues Cys-71, Cys-73, Cys-86, and Cys-89. Mg(2+)-binding residues include Asp-462, Asp-464, and Asp-466. Residues Cys-810, Cys-884, Cys-891, and Cys-894 each contribute to the Zn(2+) site. Basic and acidic residues predominate over residues 1372–1382; it reads DEQLAQQREDA. The disordered stretch occupies residues 1372-1396; sequence DEQLAQQREDAMEPLPAEIALSDAE.

The protein belongs to the RNA polymerase beta' chain family. The RNAP catalytic core consists of 2 alpha, 1 beta, 1 beta' and 1 omega subunit. When a sigma factor is associated with the core the holoenzyme is formed, which can initiate transcription. Requires Mg(2+) as cofactor. The cofactor is Zn(2+).

It carries out the reaction RNA(n) + a ribonucleoside 5'-triphosphate = RNA(n+1) + diphosphate. In terms of biological role, DNA-dependent RNA polymerase catalyzes the transcription of DNA into RNA using the four ribonucleoside triphosphates as substrates. The sequence is that of DNA-directed RNA polymerase subunit beta' from Caulobacter vibrioides (strain ATCC 19089 / CIP 103742 / CB 15) (Caulobacter crescentus).